The chain runs to 224 residues: tRNA (guanine-N(7)-)-methyltransferase (224 aa).

Positions 45, 70, 97, and 119 each coordinate S-adenosyl-L-methionine. Asp119 is an active-site residue. Substrate-binding positions include Lys123, Asp155, and 199–202; that span reads TEYE.

It belongs to the class I-like SAM-binding methyltransferase superfamily. TrmB family.

It carries out the reaction guanosine(46) in tRNA + S-adenosyl-L-methionine = N(7)-methylguanosine(46) in tRNA + S-adenosyl-L-homocysteine. Its pathway is tRNA modification; N(7)-methylguanine-tRNA biosynthesis. Catalyzes the formation of N(7)-methylguanine at position 46 (m7G46) in tRNA. This is tRNA (guanine-N(7)-)-methyltransferase from Ureaplasma urealyticum serovar 10 (strain ATCC 33699 / Western).